Here is a 4518-residue protein sequence, read N- to C-terminus: Dynein axonemal heavy chain 11 (4518 aa).

The interval 1 to 1857 is stem; sequence MAASVAAQEA…LVHICDAQFQ (1857 aa). 4 AAA regions span residues 1858-2079, 2139-2368, 2474-2721, and 2819-3068; these read YFYE…VLVV, QMVR…TSFK, TMDP…VFQG, and NYND…EGRH. ATP contacts are provided by residues 1896–1903, 2177–2184, 2512–2519, and 2857–2864; these read GPAGTGKT, GNAGTGKS, GNAGVGKT, and GVGGSGKQ. The stalk stretch occupies residues 3074–3405; it reads KSFLEQISLF…GQSIKSFEAQ (332 aa). The stretch at 3322–3391 forms a coiled coil; it reads LAQANLELAT…NRLVKELEVK (70 aa). AAA stretches follow at residues 3461–3688 and 3898–4124; these read LTDD…EIER and LRNF…VLYN.

Belongs to the dynein heavy chain family. As to quaternary structure, consists of at least two heavy chains and a number of intermediate and light chains. Interacts with CFAP45.

It localises to the cytoplasm. Its subcellular location is the cytoskeleton. The protein resides in the cilium axoneme. Functionally, force generating protein of respiratory cilia. Produces force towards the minus ends of microtubules. Dynein has ATPase activity; the force-producing power stroke is thought to occur on release of ADP. In Sus scrofa (Pig), this protein is Dynein axonemal heavy chain 11 (DNAH11).